The sequence spans 588 residues: Catechol oxidase B, chloroplastic (588 aa).

The N-terminal 88 residues, 1-88, are a transit peptide targeting the chloroplast; it reads SSSSTTTIPL…AANLAPLASA (88 aa). 2 disulfide bridges follow: Cys-99–Cys-115 and Cys-114–Cys-181. Positions 180, 198, 207, 329, 333, and 364 each coordinate Cu cation. A cross-link (2'-(S-cysteinyl)-histidine (Cys-His)) is located at residues 184–198; it reads CNGAYKVGGKELQVH.

The protein belongs to the tyrosinase family. Cu(2+) is required as a cofactor.

The protein resides in the plastid. It localises to the chloroplast thylakoid lumen. It catalyses the reaction 2 catechol + O2 = 2 1,2-benzoquinone + 2 H2O. In terms of biological role, catalyzes the oxidation of mono- and o-diphenols to o-diquinones. The sequence is that of Catechol oxidase B, chloroplastic from Solanum tuberosum (Potato).